We begin with the raw amino-acid sequence, 351 residues long: Probable E3 ubiquitin-protein ligase sinah (351 aa).

The disordered stretch occupies residues 1–38 (MSVRNSRPQLSWPERVSPQRTIDTPTASGEMLTRRQSA). Polar residues predominate over residues 18–27 (PQRTIDTPTA). The RING-type zinc finger occupies 106 to 141 (CPVCFGYIMPPIMQCPRGHLICSTCRSKLTICPVCR). The interval 155-346 (VASKLIFPCK…LALNVVIRKV (192 aa)) is SBD. Residues 158 to 218 (KLIFPCKHSH…VYQHLMSSHE (61 aa)) form an SIAH-type zinc finger. Zn(2+)-binding residues include cysteine 163, cysteine 170, histidine 182, cysteine 186, cysteine 193, cysteine 200, histidine 212, and histidine 217.

This sequence belongs to the SINA (Seven in absentia) family. As to quaternary structure, interacts with ebi and phyl.

It carries out the reaction S-ubiquitinyl-[E2 ubiquitin-conjugating enzyme]-L-cysteine + [acceptor protein]-L-lysine = [E2 ubiquitin-conjugating enzyme]-L-cysteine + N(6)-ubiquitinyl-[acceptor protein]-L-lysine.. Its pathway is protein modification; protein ubiquitination. Functionally, E3 ubiquitin-protein ligase that mediates ubiquitination and subsequent proteasomal degradation of target proteins. The adapter phyl is required to direct the degradation of the two isoforms of the transcriptional repressor Tramtrack (Ttk). E3 ubiquitin ligases accept ubiquitin from an E2 ubiquitin-conjugating enzyme in the form of a thioester and then directly transfers the ubiquitin to targeted substrates. It probably triggers the ubiquitin-mediated degradation of different substrates. A phyl-independent mechanism of degradation exists for isoform beta of ttk that involves motifs in the C-terminus of ttk. The sequence is that of Probable E3 ubiquitin-protein ligase sinah (sinah) from Drosophila melanogaster (Fruit fly).